The primary structure comprises 259 residues: NADP-dependent 3-hydroxy acid dehydrogenase (259 aa).

Residue I11 coordinates NADP(+). S42 bears the Phosphoserine mark. T43 is subject to Phosphothreonine. Residues D65, N92, R126, Y158, K162, and V191 each coordinate NADP(+). Residue Y158 is the Proton acceptor of the active site. K162 functions as the Lowers pKa of active site Tyr in the catalytic mechanism.

This sequence belongs to the short-chain dehydrogenases/reductases (SDR) family. As to quaternary structure, homotetramer.

The protein resides in the cytoplasm. Its subcellular location is the nucleus. It catalyses the reaction L-allo-threonine + NADP(+) = aminoacetone + CO2 + NADPH. In terms of biological role, NADP-dependent dehydrogenase with broad substrate specificity acting on 3-hydroxy acids. Catalyzes the NADP-dependent oxidation of L-allo-threonine to L-2-amino-3-keto-butyrate, which is spontaneously decarboxylated into aminoacetone. Also acts on D-threonine, L-serine, D-serine, D-3-hydroxyisobutyrate, L-3-hydroxyisobutyrate, D-glycerate and L-glycerate. This chain is NADP-dependent 3-hydroxy acid dehydrogenase, found in Schizosaccharomyces pombe (strain 972 / ATCC 24843) (Fission yeast).